Consider the following 119-residue polypeptide: Holo-[acyl-carrier-protein] synthase (119 aa).

The Mg(2+) site is built by D8 and E58.

Belongs to the P-Pant transferase superfamily. AcpS family. Mg(2+) is required as a cofactor.

The protein localises to the cytoplasm. The catalysed reaction is apo-[ACP] + CoA = holo-[ACP] + adenosine 3',5'-bisphosphate + H(+). In terms of biological role, transfers the 4'-phosphopantetheine moiety from coenzyme A to a Ser of acyl-carrier-protein. The polypeptide is Holo-[acyl-carrier-protein] synthase (Streptococcus thermophilus (strain ATCC BAA-491 / LMD-9)).